A 572-amino-acid polypeptide reads, in one-letter code: Proline--tRNA ligase (572 aa).

Belongs to the class-II aminoacyl-tRNA synthetase family. ProS type 1 subfamily. Homodimer.

It localises to the cytoplasm. It carries out the reaction tRNA(Pro) + L-proline + ATP = L-prolyl-tRNA(Pro) + AMP + diphosphate. Catalyzes the attachment of proline to tRNA(Pro) in a two-step reaction: proline is first activated by ATP to form Pro-AMP and then transferred to the acceptor end of tRNA(Pro). As ProRS can inadvertently accommodate and process non-cognate amino acids such as alanine and cysteine, to avoid such errors it has two additional distinct editing activities against alanine. One activity is designated as 'pretransfer' editing and involves the tRNA(Pro)-independent hydrolysis of activated Ala-AMP. The other activity is designated 'posttransfer' editing and involves deacylation of mischarged Ala-tRNA(Pro). The misacylated Cys-tRNA(Pro) is not edited by ProRS. This Escherichia coli O157:H7 protein is Proline--tRNA ligase.